Reading from the N-terminus, the 414-residue chain is Multifunctional CCA protein (414 aa).

Residues glycine 8 and arginine 11 each coordinate ATP. Residues glycine 8 and arginine 11 each coordinate CTP. Mg(2+)-binding residues include aspartate 21 and aspartate 23. Residues arginine 91, arginine 137, and arginine 140 each contribute to the ATP site. 3 residues coordinate CTP: arginine 91, arginine 137, and arginine 140. The HD domain occupies 226–327; that stretch reads TGVHVMMVVD…VTLFERCDAF (102 aa).

This sequence belongs to the tRNA nucleotidyltransferase/poly(A) polymerase family. Bacterial CCA-adding enzyme type 1 subfamily. In terms of assembly, monomer. Can also form homodimers and oligomers. Mg(2+) is required as a cofactor. It depends on Ni(2+) as a cofactor.

The enzyme catalyses a tRNA precursor + 2 CTP + ATP = a tRNA with a 3' CCA end + 3 diphosphate. It carries out the reaction a tRNA with a 3' CCA end + 2 CTP + ATP = a tRNA with a 3' CCACCA end + 3 diphosphate. Catalyzes the addition and repair of the essential 3'-terminal CCA sequence in tRNAs without using a nucleic acid template. Adds these three nucleotides in the order of C, C, and A to the tRNA nucleotide-73, using CTP and ATP as substrates and producing inorganic pyrophosphate. tRNA 3'-terminal CCA addition is required both for tRNA processing and repair. Also involved in tRNA surveillance by mediating tandem CCA addition to generate a CCACCA at the 3' terminus of unstable tRNAs. While stable tRNAs receive only 3'-terminal CCA, unstable tRNAs are marked with CCACCA and rapidly degraded. The chain is Multifunctional CCA protein from Herminiimonas arsenicoxydans.